Consider the following 349-residue polypeptide: Probable esterase Cgl0839 (349 aa).

Residues 60-329 (GTHQTWFQQY…EDIAGHLGLF (270 aa)) form the AB hydrolase-1 domain. Residue Ser-142 is the Nucleophile of the active site. Active-site residues include Asp-296 and His-325.

Belongs to the AB hydrolase superfamily. Acetyl esterase family. In terms of assembly, homodimer.

In terms of biological role, esterase that catalyzes the hydrolysis of 4-nitrophenyl acetate in vitro. In Corynebacterium glutamicum (strain ATCC 13032 / DSM 20300 / JCM 1318 / BCRC 11384 / CCUG 27702 / LMG 3730 / NBRC 12168 / NCIMB 10025 / NRRL B-2784 / 534), this protein is Probable esterase Cgl0839.